The chain runs to 147 residues: Transthyretin (147 aa).

A signal peptide spans 1–20 (MASLRLFLLCLAGLVFVSEA). Sulfocysteine is present on Cys30. L-thyroxine is bound at residue Lys35. Glu62 carries the post-translational modification 4-carboxyglutamate. Ser72 is subject to Phosphoserine. Glu74 is an L-thyroxine binding site. N-linked (GlcNAc...) asparagine glycosylation is present at Asn118. Ser137 serves as a coordination point for L-thyroxine.

The protein belongs to the transthyretin family. As to quaternary structure, homotetramer. Dimer of dimers. In the homotetramer, subunits assemble around a central channel that can accommodate two ligand molecules. Interacts with RBP4. Sulfonation of the reactive cysteine Cys-30 enhances the stability of the native conformation of TTR, avoiding misassembly of the protein leading to amyloid formation. As to expression, detected in plasma (at protein level). Detected in liver.

It is found in the secreted. Its function is as follows. Thyroid hormone-binding protein. Probably transports thyroxine from the bloodstream to the brain. This chain is Transthyretin (Ttr), found in Mus musculus (Mouse).